Here is a 494-residue protein sequence, read N- to C-terminus: 4-trimethylaminobutyraldehyde dehydrogenase (494 aa).

An N-acetylserine modification is found at Ser2. Lys30 carries the N6-acetyllysine; alternate modification. Lys30 bears the N6-succinyllysine; alternate mark. Lys59 bears the N6-succinyllysine mark. Residues Lys180 and 232–236 (GSVPT) contribute to the NAD(+) site. Glu254 serves as the catalytic Proton acceptor. Cys288 acts as the Nucleophile in catalysis. Lys298 carries the N6-acetyllysine modification. Lys303 bears the N6-acetyllysine; alternate mark. At Lys303 the chain carries N6-succinyllysine; alternate. Lys344 carries the N6-acetyllysine modification. Glu391 serves as a coordination point for NAD(+).

The protein belongs to the aldehyde dehydrogenase family. Homotetramer.

The protein resides in the cytoplasm. It localises to the cytosol. The catalysed reaction is 4-(trimethylamino)butanal + NAD(+) + H2O = 4-(trimethylamino)butanoate + NADH + 2 H(+). The enzyme catalyses an aldehyde + NAD(+) + H2O = a carboxylate + NADH + 2 H(+). It carries out the reaction 4-aminobutanal + NAD(+) + H2O = 4-aminobutanoate + NADH + 2 H(+). It catalyses the reaction formaldehyde + NAD(+) + H2O = formate + NADH + 2 H(+). The catalysed reaction is acetaldehyde + NAD(+) + H2O = acetate + NADH + 2 H(+). The enzyme catalyses imidazole-4-acetaldehyde + NAD(+) + H2O = imidazole-4-acetate + NADH + 2 H(+). It carries out the reaction acrolein + NAD(+) + H2O = acrylate + NADH + 2 H(+). It catalyses the reaction (5-hydroxyindol-3-yl)acetaldehyde + NAD(+) + H2O = (5-hydroxyindol-3-yl)acetate + NADH + 2 H(+). The catalysed reaction is 3,4-dihydroxyphenylacetaldehyde + NAD(+) + H2O = 3,4-dihydroxyphenylacetate + NADH + 2 H(+). The enzyme catalyses spermine monoaldehyde + NAD(+) + H2O = N-(2-carboxyethyl)spermidine + NADH + 2 H(+). It carries out the reaction propanal + NAD(+) + H2O = propanoate + NADH + 2 H(+). It catalyses the reaction butanal + NAD(+) + H2O = butanoate + NADH + 2 H(+). The catalysed reaction is pentanal + NAD(+) + H2O = pentanoate + NADH + 2 H(+). The enzyme catalyses hexanal + NAD(+) + H2O = hexanoate + NADH + 2 H(+). The protein operates within amine and polyamine biosynthesis; carnitine biosynthesis. Its function is as follows. Converts gamma-trimethylaminobutyraldehyde into gamma-butyrobetaine with high efficiency (in vitro). Can catalyze the irreversible oxidation of a broad range of aldehydes to the corresponding acids in an NAD-dependent reaction, but with low efficiency. Catalyzes the oxidation of aldehydes arising from biogenic amines and polyamines. The protein is 4-trimethylaminobutyraldehyde dehydrogenase of Mus musculus (Mouse).